We begin with the raw amino-acid sequence, 132 residues long: Large-conductance mechanosensitive channel (132 aa).

3 consecutive transmembrane segments (helical) span residues 14–34 (VVDL…VSSL), 38–58 (IITP…LHFG), and 67–87 (GNFI…FMFI).

The protein belongs to the MscL family. Homopentamer.

It is found in the cell membrane. Functionally, channel that opens in response to stretch forces in the membrane lipid bilayer. May participate in the regulation of osmotic pressure changes within the cell. The polypeptide is Large-conductance mechanosensitive channel (Bacillus cereus (strain G9842)).